Here is a 286-residue protein sequence, read N- to C-terminus: 2-hydroxy-6-oxo-6-phenylhexa-2,4-dienoate hydrolase (286 aa).

Substrate is bound by residues 42 to 43, N51, N111, S180, and R190; that span reads GG. H265 (proton acceptor) is an active-site residue. W266 is a substrate binding site.

Belongs to the AB hydrolase superfamily. BphD family. Homodimer.

The enzyme catalyses 2,6-dioxo-6-phenylhexa-3-enoate + H2O = 2-oxopent-4-enoate + benzoate + H(+). It functions in the pathway xenobiotic degradation; biphenyl degradation; 2-hydroxy-2,4-pentadienoate and benzoate from biphenyl: step 4/4. Its activity is regulated as follows. Inhibited by 3-Cl HOPDA. Catalyzes an unusual C-C bond hydrolysis of 2-hydroxy-6-oxo-6-phenylhexa-2,4-dienoic acid (HOPDA) to produce benzoic acid and 2-hydroxy-2,4-pentadienoic acid (HPD). This Paraburkholderia xenovorans (strain LB400) protein is 2-hydroxy-6-oxo-6-phenylhexa-2,4-dienoate hydrolase (bphD).